Reading from the N-terminus, the 258-residue chain is Type III pantothenate kinase (258 aa).

D6–V13 contacts ATP. Residues Y100 and G107–R110 each bind substrate. D109 serves as the catalytic Proton acceptor. Residue D129 coordinates K(+). ATP is bound at residue T132. T184 lines the substrate pocket.

Belongs to the type III pantothenate kinase family. Homodimer. The cofactor is NH4(+). K(+) serves as cofactor.

The protein localises to the cytoplasm. It carries out the reaction (R)-pantothenate + ATP = (R)-4'-phosphopantothenate + ADP + H(+). The protein operates within cofactor biosynthesis; coenzyme A biosynthesis; CoA from (R)-pantothenate: step 1/5. Its function is as follows. Catalyzes the phosphorylation of pantothenate (Pan), the first step in CoA biosynthesis. In Bacillus velezensis (strain DSM 23117 / BGSC 10A6 / LMG 26770 / FZB42) (Bacillus amyloliquefaciens subsp. plantarum), this protein is Type III pantothenate kinase.